The following is a 361-amino-acid chain: 3-dehydroquinate synthase (361 aa).

Belongs to the archaeal-type DHQ synthase family.

It carries out the reaction 2-amino-2,3,7-trideoxy-D-lyxo-hept-6-ulosonate + NAD(+) + H2O = 3-dehydroquinate + NH4(+) + NADH + H(+). In terms of biological role, catalyzes the oxidative deamination and cyclization of 2-amino-3,7-dideoxy-D-threo-hept-6-ulosonic acid (ADH) to yield 3-dehydroquinate (DHQ), which is fed into the canonical shikimic pathway of aromatic amino acid biosynthesis. In Methanococcus maripaludis (strain DSM 14266 / JCM 13030 / NBRC 101832 / S2 / LL), this protein is 3-dehydroquinate synthase.